Consider the following 83-residue polypeptide: Beta/kappa-theraphotoxin-Cg2a (83 aa).

The signal sequence occupies residues 1–21; sequence MKASVFAVILGLVVLCACSFA. Positions 22-53 are excised as a propeptide; it reads EDEQDQFVSPNELLKSMFVESRHEFTPEVEGR. 3 disulfides stabilise this stretch: Cys-55/Cys-69, Cys-62/Cys-74, and Cys-68/Cys-78. Ile-82 carries the isoleucine amide modification.

It belongs to the neurotoxin 30 (phrixotoxin) family. Expressed by the venom gland.

Its subcellular location is the secreted. In terms of biological role, this gating-modifier toxin shows an important inhibitory activity on sodium channels. It is very active on Nav1.7/SCN9A (IC(50)~0.6 nM), and also shows activity on Nav1.3/SCN3A (IC(50)=292 nM), Nav1.4/SCN4A (IC(50)=2.2-159 nM), and Nav1.5/SCN5A (IC(50)=2.3-2.9 uM). It has also been shown to inhibit tetrodotoxin (TTX)-resistant (IC(50)=27.6 nM) and TTX-sensitive (IC(50)=30.2 nM) sodium channels in rat dorsal root ganglion neurons. Lower inhibitory activity has also been shown on potassium channels: Kv4.2/KCND2 (IC(50)=604.2 nM), Kv4.3/KCND3 (IC(50)=425.1 nM), and Kv2.1/KCNB1 (IC(50)=14.3 uM). It binds to phospholipid membranes. Like its analog AM-8145, it may act by interacting only with the second voltage-sensor domain of Nav1.7/SCN9A. The chain is Beta/kappa-theraphotoxin-Cg2a from Chilobrachys guangxiensis (Chinese earth tiger tarantula).